The primary structure comprises 228 residues: Ras-related protein Rab-33B (228 aa).

The GTP site is built by N41, V42, G43, K44, T45, C46, T60, and T63. T45 contacts Mg(2+). The Switch 1 signature appears at 54–66 (GRFPQRTEATIGV). Positions 63 and 86 each coordinate Mg(2+). A Switch 2 motif is present at residues 87 to 106 (TAGQERFRKSMVQHYYRNVH). 6 residues coordinate GTP: G89, N146, K147, D149, A177, and K178. S-geranylgeranyl cysteine attachment occurs at residues C226 and C228. A Cysteine methyl ester modification is found at C228.

This sequence belongs to the small GTPase superfamily. Rab family. As to quaternary structure, interacts (GTP- and GDP-bound forms) with ATG16L1; the complex consists of a tetramer where two RAB33B molecules bind independently one molecule of the ATG16L1 homodimer; the interaction promotes ATG12-ATG5-ATG16L1 complex recruitment to phagophores. Interacts with ATG16L2; however interaction is approximately hundred times lower than for ATG16L1. Interacts with RIC1 (via C-terminus domain); the interaction is direct with a preference for RAB33B-GTP. Interacts with RGP1. Mg(2+) is required as a cofactor.

Its subcellular location is the golgi apparatus membrane. The protein localises to the golgi apparatus. It is found in the cis-Golgi network. It localises to the preautophagosomal structure membrane. The catalysed reaction is GTP + H2O = GDP + phosphate + H(+). With respect to regulation, regulated by guanine nucleotide exchange factors (GEFs) which promote the exchange of bound GDP for free GTP. Regulated by GTPase activating proteins (GAPs) such as SGSM2 which increase the GTP hydrolysis activity. Inhibited by GDP dissociation inhibitors (GDIs). The small GTPases Rab are key regulators of intracellular membrane trafficking, from the formation of transport vesicles to their fusion with membranes. Rabs cycle between an inactive GDP-bound form and an active GTP-bound form that is able to recruit to membranes different sets of downstream effectors directly responsible for vesicle formation, movement, tethering and fusion. RAB33B acts, in coordination with RAB6A, to regulate intra-Golgi retrograde trafficking. Participates in autophagosome formation by recruiting the ATG12-ATG5-ATG16L1 complex to phagophores, probably in a nucleotide-independent manner. This is Ras-related protein Rab-33B (RAB33B) from Gallus gallus (Chicken).